Here is a 283-residue protein sequence, read N- to C-terminus: CASP-like protein 4A3 (283 aa).

Residues 1–86 (MRSPAKTMPS…VEETPSPIVV (86 aa)) are disordered. Residues 1 to 135 (MRSPAKTMPS…SRREEVVKFS (135 aa)) are Cytoplasmic-facing. Over residues 9–20 (PSMSPSSVSTEK) the composition is skewed to low complexity. The segment covering 50-79 (SLDHSSESEKEDAKSKPESRRNKNPGKVEE) has biased composition (basic and acidic residues). Residues 136–156 (ALGFRLSEVVLALISFSIMAA) form a helical membrane-spanning segment. Residues 157–174 (DKTKGWSGDSFDRYKEYR) are Extracellular-facing. Residues 175-195 (FCLSVNVVAFVYSSFQACDLA) traverse the membrane as a helical segment. Topologically, residues 196 to 212 (YHLVKEKHLISHHLRPL) are cytoplasmic. Residues 213–233 (FEFIIDQVLAYLLMSASTAAV) form a helical membrane-spanning segment. The Extracellular portion of the chain corresponds to 234 to 251 (TRVDDWVSNWGKDEFTEM). Residues 252–272 (ASASIAMSFLAFLAFAFSSLI) traverse the membrane as a helical segment. The Cytoplasmic portion of the chain corresponds to 273-283 (SGYNLFNQGSL).

Belongs to the Casparian strip membrane proteins (CASP) family. In terms of assembly, homodimer and heterodimers.

The protein localises to the cell membrane. In Arabidopsis thaliana (Mouse-ear cress), this protein is CASP-like protein 4A3.